Reading from the N-terminus, the 1343-residue chain is DNA-directed RNA polymerase subunit beta (1343 aa).

It belongs to the RNA polymerase beta chain family. As to quaternary structure, the RNAP catalytic core consists of 2 alpha, 1 beta, 1 beta' and 1 omega subunit. When a sigma factor is associated with the core the holoenzyme is formed, which can initiate transcription.

The catalysed reaction is RNA(n) + a ribonucleoside 5'-triphosphate = RNA(n+1) + diphosphate. Functionally, DNA-dependent RNA polymerase catalyzes the transcription of DNA into RNA using the four ribonucleoside triphosphates as substrates. This is DNA-directed RNA polymerase subunit beta from Haemophilus influenzae (strain PittGG).